The primary structure comprises 77 residues: RNA-binding protein Hfq (77 aa).

Residues 9–69 enclose the Sm domain; sequence DQFLNQLRKE…ISTFAPQKNV (61 aa).

It belongs to the Hfq family. Homohexamer.

RNA chaperone that binds small regulatory RNA (sRNAs) and mRNAs to facilitate mRNA translational regulation in response to envelope stress, environmental stress and changes in metabolite concentrations. Also binds with high specificity to tRNAs. In Shouchella clausii (strain KSM-K16) (Alkalihalobacillus clausii), this protein is RNA-binding protein Hfq.